Consider the following 385-residue polypeptide: Tyrosine--tRNA ligase 1, cytoplasmic (385 aa).

Residues Pro77–Gln85 carry the 'HIGH' region motif. The L-tyrosine site is built by Tyr200, Gln204, Asp207, and Gln222. A 'KMSKS' region motif is present at residues Lys259–Ser263. ATP is bound at residue Lys262.

It belongs to the class-I aminoacyl-tRNA synthetase family.

The protein localises to the cytoplasm. Its subcellular location is the cytosol. The enzyme catalyses tRNA(Tyr) + L-tyrosine + ATP = L-tyrosyl-tRNA(Tyr) + AMP + diphosphate + H(+). Functionally, catalyzes the attachment of tyrosine to tRNA(Tyr) in a two-step reaction: tyrosine is first activated by ATP to form Tyr-AMP and then transferred to the acceptor end of tRNA(Tyr). The polypeptide is Tyrosine--tRNA ligase 1, cytoplasmic (Arabidopsis thaliana (Mouse-ear cress)).